We begin with the raw amino-acid sequence, 256 residues long: Methylesterase 9 (256 aa).

Ser78 acts as the Acyl-ester intermediate in catalysis. Active-site charge relay system residues include Asp206 and His234.

Belongs to the AB hydrolase superfamily. Methylesterase family.

The enzyme catalyses methyl (indol-3-yl)acetate + H2O = (indol-3-yl)acetate + methanol + H(+). It carries out the reaction methyl (-)-jasmonate + H2O = jasmonate + methanol + H(+). The catalysed reaction is methyl salicylate + H2O = salicylate + methanol + H(+). It participates in plant hormone biosynthesis. It functions in the pathway lipid metabolism; oxylipin biosynthesis. Its activity is regulated as follows. Esterase activity is down-regulated by salicylic acid (SA). Functionally, methylesterase shown to have carboxylesterase activity, methyl indole-3-acetic acid (MeIAA) esterase activity, methyl salicylate (MeSA) esterase activity and methyl jasmonate (MeJA) esterase activity in vitro. Required to convert methyl salicylate (MeSA) to salicylic acid (SA) as part of the signal transduction pathways that activate systemic acquired resistance in systemic tissue. MeSA is believed to be an inactive form that needs to be demethylated to exert a biological effect. This is Methylesterase 9 from Arabidopsis thaliana (Mouse-ear cress).